Here is a 306-residue protein sequence, read N- to C-terminus: Small ribosomal subunit protein uS2 (306 aa).

A compositionally biased stretch (basic and acidic residues) spans 229–238; that stretch reads GEESAAEERP. The tract at residues 229 to 306 is disordered; sequence GEESAAEERP…VGEGDESEER (78 aa). The span at 261 to 287 shows a compositional bias: acidic residues; sequence QPGEPEAEAFEEAAGEPEDSTEEEAAE.

The protein belongs to the universal ribosomal protein uS2 family.

The polypeptide is Small ribosomal subunit protein uS2 (Rubrobacter xylanophilus (strain DSM 9941 / JCM 11954 / NBRC 16129 / PRD-1)).